Here is a 624-residue protein sequence, read N- to C-terminus: Pentatricopeptide repeat-containing protein At4g31070, mitochondrial (624 aa).

The N-terminal 15 residues, Met-1–Ala-15, are a transit peptide targeting the mitochondrion. 14 PPR repeats span residues Phe-56–Cys-91, Asp-92–Arg-122, Asp-123–Pro-157, Lys-158–Met-192, Ser-195–Lys-225, Asn-226–Pro-260, Asn-261–Ala-296, Asp-297–Arg-327, Asp-328–Ala-362, Asn-363–Ser-397, His-398–Lys-428, Asp-429–Val-463, Asp-464–Val-498, and Thr-499–Lys-529. Residues Ile-534–Glu-610 are type E motif.

It belongs to the PPR family. PCMP-E subfamily.

It is found in the mitochondrion. This Arabidopsis thaliana (Mouse-ear cress) protein is Pentatricopeptide repeat-containing protein At4g31070, mitochondrial (PCMP-E7).